The primary structure comprises 261 residues: Single-strand annealing weakened protein 1 (261 aa).

Interacts with MSH2, MSH3, RAD1, RAD10, RAD51 and RAD52.

It localises to the nucleus. Functionally, catalyzes 3'-non-homologous tail removal of RAD1/RAD10-dependent single-strand annealing recombination intermediates. Plays a key role in targeting RAD1/RAD10 complex to 3'-flap cleavage substrate in recombination. Also contributes to the integrity of ribosomal DNA arrays. This chain is Single-strand annealing weakened protein 1 (SAW1), found in Saccharomyces cerevisiae (strain ATCC 204508 / S288c) (Baker's yeast).